The chain runs to 230 residues: Ribonuclease 3 (230 aa).

In terms of domain architecture, RNase III spans 1–134 (MKQLEELLST…FLGALLLDKG (134 aa)). A Mg(2+)-binding site is contributed by E47. The active site involves D51. 2 residues coordinate Mg(2+): D120 and E123. E123 is an active-site residue. In terms of domain architecture, DRBM spans 160–229 (DYKTCLQEFL…AKNALAQLSE (70 aa)).

The protein belongs to the ribonuclease III family. As to quaternary structure, homodimer. Mg(2+) is required as a cofactor.

Its subcellular location is the cytoplasm. It catalyses the reaction Endonucleolytic cleavage to 5'-phosphomonoester.. Functionally, digests double-stranded RNA. Involved in the processing of primary rRNA transcript to yield the immediate precursors to the large and small rRNAs (23S and 16S). Processes some mRNAs, and tRNAs when they are encoded in the rRNA operon. Processes pre-crRNA and tracrRNA of type II CRISPR loci if present in the organism. The protein is Ribonuclease 3 of Streptococcus pyogenes serotype M28 (strain MGAS6180).